Here is a 358-residue protein sequence, read N- to C-terminus: 3-isopropylmalate dehydrogenase (358 aa).

77–90 (GPKWDNLPIDQRPE) provides a ligand contact to NAD(+). Residues Arg98, Arg108, Arg137, and Asp221 each contribute to the substrate site. Asp221, Asp245, and Asp249 together coordinate Mg(2+). 279–291 (GSAPDIAHLNIAN) is a binding site for NAD(+).

It belongs to the isocitrate and isopropylmalate dehydrogenases family. LeuB type 1 subfamily. In terms of assembly, homodimer. Mg(2+) serves as cofactor. It depends on Mn(2+) as a cofactor.

The protein localises to the cytoplasm. It catalyses the reaction (2R,3S)-3-isopropylmalate + NAD(+) = 4-methyl-2-oxopentanoate + CO2 + NADH. It functions in the pathway amino-acid biosynthesis; L-leucine biosynthesis; L-leucine from 3-methyl-2-oxobutanoate: step 3/4. Its function is as follows. Catalyzes the oxidation of 3-carboxy-2-hydroxy-4-methylpentanoate (3-isopropylmalate) to 3-carboxy-4-methyl-2-oxopentanoate. The product decarboxylates to 4-methyl-2 oxopentanoate. The sequence is that of 3-isopropylmalate dehydrogenase from Campylobacter jejuni (strain RM1221).